The chain runs to 520 residues: MPTTLRMLNNNLLIVIGTFAVCVYIVLQRSKARLPLPPGPRKWPLIGNLLDMPGGRAWLKYAEWSREYGSDIIHLSAAGTSILVLNSAELVNELMEKRSAIYSSRAQLTMLHELMGWKDAFSFAPTNPTWRAQRKIFMQALNPNNAALFHGKQLRATHELLWRLHKGPANLFHELHHWAAILIMDITYGIRGDAADPYIETAVEALDSMAIAGAPGAFLVDAVPLLRHMPEWTPGAGFKRQAREWNVLRQKMANRPFIAAKQQITSGSYTPSLVSNALEAVDKNQDLAEQEELIKGAAVTSYGGGSDTVVAAVSAFVLAILQHPEIQAKAQRQLDEVLGHGELPSFQDVQSLPYITALVKEVLRHNPVTPLAIPHLLSEDDTWDGYWLPKGSIVMANAWAILHDENTYPDPMPFNPDRFLRPDGKLDETVKDPATASFGFGRRLCPGRHIALSSIWISVASILACYVIRKEVDAAGREVVPDGEWYGGPTLFNRPLPFKCRFTPRSKAAEAIIVSLENTV.

A helical transmembrane segment spans residues 7-27; that stretch reads MLNNNLLIVIGTFAVCVYIVL. Cys445 contributes to the heme binding site.

It belongs to the cytochrome P450 family. It depends on heme as a cofactor.

The protein localises to the membrane. It functions in the pathway secondary metabolite biosynthesis. Its function is as follows. Cytochrome P450 monooxygenase that is able to use pyrene, phenanthrene, 3,5-dimethoxy-trans-stilbene and 3,5,4'-trimethoxy-trans-stilbene as substrates for oxidation. The protein is Cytochrome P450 monooxygenase 98 of Postia placenta (strain ATCC 44394 / Madison 698-R) (Brown rot fungus).